The primary structure comprises 152 residues: 6,7-dimethyl-8-ribityllumazine synthase (152 aa).

5-amino-6-(D-ribitylamino)uracil is bound by residues Phe-21, 55–57, and 79–81; these read AFE and AVI. Position 84–85 (84–85) interacts with (2S)-2-hydroxy-3-oxobutyl phosphate; it reads AT. His-87 (proton donor) is an active-site residue. A 5-amino-6-(D-ribitylamino)uracil-binding site is contributed by Phe-112. Residue Arg-126 coordinates (2S)-2-hydroxy-3-oxobutyl phosphate.

The protein belongs to the DMRL synthase family. Forms an icosahedral capsid composed of 60 subunits, arranged as a dodecamer of pentamers.

It carries out the reaction (2S)-2-hydroxy-3-oxobutyl phosphate + 5-amino-6-(D-ribitylamino)uracil = 6,7-dimethyl-8-(1-D-ribityl)lumazine + phosphate + 2 H2O + H(+). Its pathway is cofactor biosynthesis; riboflavin biosynthesis; riboflavin from 2-hydroxy-3-oxobutyl phosphate and 5-amino-6-(D-ribitylamino)uracil: step 1/2. Functionally, catalyzes the formation of 6,7-dimethyl-8-ribityllumazine by condensation of 5-amino-6-(D-ribitylamino)uracil with 3,4-dihydroxy-2-butanone 4-phosphate. This is the penultimate step in the biosynthesis of riboflavin. The protein is 6,7-dimethyl-8-ribityllumazine synthase of Exiguobacterium sibiricum (strain DSM 17290 / CCUG 55495 / CIP 109462 / JCM 13490 / 255-15).